The chain runs to 105 residues: Nitrogen fixation nifHD region glnB-like protein 1 (105 aa).

The protein belongs to the P(II) protein family.

Functionally, could be involved in the regulation of nitrogen fixation. The chain is Nitrogen fixation nifHD region glnB-like protein 1 (glnBI) from Methanococcus maripaludis (Methanococcus deltae).